We begin with the raw amino-acid sequence, 44 residues long: uncharacterized protein (44 aa).

The disordered stretch occupies residues L22–N44.

This is an uncharacterized protein from Dictyostelium discoideum (Social amoeba).